The primary structure comprises 116 residues: Evasin P1180 (116 aa).

A signal peptide spans 1-25; it reads MARNWSFRVIFVSAMWCALLKFATL. Disulfide bonds link Cys-38–Cys-58, Cys-54–Cys-95, Cys-71–Cys-100, and Cys-90–Cys-109. N-linked (GlcNAc...) asparagine glycans are attached at residues Asn-45, Asn-73, and Asn-104.

Its subcellular location is the secreted. Salivary chemokine-binding protein which binds to host chemokines CCL2, CCL3, CCL4, CCL8 and CCL18. This Amblyomma triste (Neotropical tick) protein is Evasin P1180.